We begin with the raw amino-acid sequence, 72 residues long: Translational regulator CsrA (72 aa).

The protein belongs to the CsrA/RsmA family. As to quaternary structure, homodimer; the beta-strands of each monomer intercalate to form a hydrophobic core, while the alpha-helices form wings that extend away from the core.

The protein localises to the cytoplasm. In terms of biological role, a translational regulator that binds mRNA to regulate translation initiation and/or mRNA stability. Usually binds in the 5'-UTR at or near the Shine-Dalgarno sequence preventing ribosome-binding, thus repressing translation. Its main target seems to be the major flagellin gene, while its function is anatagonized by FliW. This chain is Translational regulator CsrA, found in Clostridium novyi (strain NT).